We begin with the raw amino-acid sequence, 429 residues long: 3-phosphoshikimate 1-carboxyvinyltransferase (429 aa).

3-phosphoshikimate contacts are provided by Lys20, Ser21, and Arg25. A phosphoenolpyruvate-binding site is contributed by Lys20. Residues Gly89 and Arg118 each contribute to the phosphoenolpyruvate site. The 3-phosphoshikimate site is built by Ser164, Ser165, Gln166, Ser192, Asp311, and Lys338. Gln166 lines the phosphoenolpyruvate pocket. Asp311 serves as the catalytic Proton acceptor. Phosphoenolpyruvate is bound by residues Arg342 and Arg384.

Belongs to the EPSP synthase family. Monomer.

It is found in the cytoplasm. The catalysed reaction is 3-phosphoshikimate + phosphoenolpyruvate = 5-O-(1-carboxyvinyl)-3-phosphoshikimate + phosphate. The protein operates within metabolic intermediate biosynthesis; chorismate biosynthesis. Its function is as follows. Catalyzes the transfer of the enolpyruvyl moiety of phosphoenolpyruvate (PEP) to the 5-hydroxyl of shikimate-3-phosphate (S3P) to produce enolpyruvyl shikimate-3-phosphate and inorganic phosphate. This is 3-phosphoshikimate 1-carboxyvinyltransferase from Methanococcus maripaludis (strain C7 / ATCC BAA-1331).